Here is a 270-residue protein sequence, read N- to C-terminus: Glutamate racemase (270 aa).

Substrate is bound by residues Asp-14–Ser-15 and Tyr-46–Gly-47. The Proton donor/acceptor role is filled by Cys-77. Substrate is bound at residue Asn-78–Thr-79. Residue Cys-189 is the Proton donor/acceptor of the active site. Substrate is bound at residue Thr-190–His-191.

This sequence belongs to the aspartate/glutamate racemases family.

The enzyme catalyses L-glutamate = D-glutamate. The protein operates within cell wall biogenesis; peptidoglycan biosynthesis. Functionally, provides the (R)-glutamate required for cell wall biosynthesis. This chain is Glutamate racemase, found in Neisseria gonorrhoeae (strain ATCC 700825 / FA 1090).